The following is a 238-amino-acid chain: Uridylate kinase (238 aa).

ATP is bound at residue 12–15 (KVSG). Residue Gly-54 coordinates UMP. ATP-binding residues include Gly-55 and Arg-59. Residues Asp-74 and 135–142 (TGNPYFTT) contribute to the UMP site. ATP-binding residues include Thr-162, Asn-163, Tyr-168, and Asp-171.

It belongs to the UMP kinase family. In terms of assembly, homohexamer.

It localises to the cytoplasm. The catalysed reaction is UMP + ATP = UDP + ADP. Its pathway is pyrimidine metabolism; CTP biosynthesis via de novo pathway; UDP from UMP (UMPK route): step 1/1. Its activity is regulated as follows. Inhibited by UTP. Catalyzes the reversible phosphorylation of UMP to UDP. This is Uridylate kinase from Azorhizobium caulinodans (strain ATCC 43989 / DSM 5975 / JCM 20966 / LMG 6465 / NBRC 14845 / NCIMB 13405 / ORS 571).